Consider the following 329-residue polypeptide: Synaptonemal complex central element protein 1 (329 aa).

Residues methionine 1 to glutamine 33 form a disordered region. Coiled-coil stretches lie at residues arginine 28–methionine 168 and lysine 194–glutamine 294. Positions isoleucine 295–threonine 329 are disordered. A compositionally biased stretch (basic and acidic residues) spans leucine 314–threonine 329.

The protein belongs to the SYCE family. Homodimer. Found in a complex with SYCP1 and SYCE2. Interacts with SYCP1, SYCE2 and SYCE3. Interacts with SIX6OS1.

It localises to the nucleus. It is found in the chromosome. Its function is as follows. Major component of the transverse central element of synaptonemal complexes (SCS), formed between homologous chromosomes during meiotic prophase. Requires SYCP1 in order to be incorporated into the central element. May have a role in the synaptonemal complex assembly, stabilization and recombination. This chain is Synaptonemal complex central element protein 1 (Syce1), found in Rattus norvegicus (Rat).